The primary structure comprises 513 residues: ATP synthase subunit beta (513 aa).

Residues 1-29 are disordered; sequence MATAPATEKKAPAKKAAAPKAAAPKKAAA. A compositionally biased stretch (low complexity) spans 14–29; it reads KKAAAPKAAAPKKAAA. Residue 186–193 coordinates ATP; it reads GGAGVGKT.

It belongs to the ATPase alpha/beta chains family. In terms of assembly, F-type ATPases have 2 components, CF(1) - the catalytic core - and CF(0) - the membrane proton channel. CF(1) has five subunits: alpha(3), beta(3), gamma(1), delta(1), epsilon(1). CF(0) has three main subunits: a(1), b(2) and c(9-12). The alpha and beta chains form an alternating ring which encloses part of the gamma chain. CF(1) is attached to CF(0) by a central stalk formed by the gamma and epsilon chains, while a peripheral stalk is formed by the delta and b chains.

It localises to the cell inner membrane. It catalyses the reaction ATP + H2O + 4 H(+)(in) = ADP + phosphate + 5 H(+)(out). Produces ATP from ADP in the presence of a proton gradient across the membrane. The catalytic sites are hosted primarily by the beta subunits. The chain is ATP synthase subunit beta from Sphingopyxis alaskensis (strain DSM 13593 / LMG 18877 / RB2256) (Sphingomonas alaskensis).